The following is a 103-amino-acid chain: uncharacterized protein (103 aa).

Helical transmembrane passes span 42–62 (PFPL…VLLA) and 65–85 (TGTL…FICA).

Its subcellular location is the membrane. This is an uncharacterized protein from Saccharomyces cerevisiae (strain ATCC 204508 / S288c) (Baker's yeast).